A 205-amino-acid polypeptide reads, in one-letter code: 3-demethoxyubiquinol 3-hydroxylase (205 aa).

Fe cation contacts are provided by E54, E84, H87, E136, E168, and H171.

Belongs to the COQ7 family. The cofactor is Fe cation.

The protein localises to the cell membrane. It carries out the reaction a 5-methoxy-2-methyl-3-(all-trans-polyprenyl)benzene-1,4-diol + AH2 + O2 = a 3-demethylubiquinol + A + H2O. It participates in cofactor biosynthesis; ubiquinone biosynthesis. Its function is as follows. Catalyzes the hydroxylation of 2-nonaprenyl-3-methyl-6-methoxy-1,4-benzoquinol during ubiquinone biosynthesis. The polypeptide is 3-demethoxyubiquinol 3-hydroxylase (Acidovorax sp. (strain JS42)).